The primary structure comprises 108 residues: Iron-sulfur cluster assembly protein CyaY (108 aa).

The protein belongs to the frataxin family.

In terms of biological role, involved in iron-sulfur (Fe-S) cluster assembly. May act as a regulator of Fe-S biogenesis. This is Iron-sulfur cluster assembly protein CyaY from Burkholderia orbicola (strain MC0-3).